Consider the following 298-residue polypeptide: Olfactory receptor 5AK3 (298 aa).

Residues 1 to 25 are Extracellular-facing; sequence MGRGNSTEVTEFHLLGFGVQHEFQH. N-linked (GlcNAc...) asparagine glycosylation is present at N5. A helical membrane pass occupies residues 26-46; that stretch reads VLFIVLLLIYVTSLIGNIGMI. Residues 47 to 54 are Cytoplasmic-facing; the sequence is LLIKTDSR. Residues 55 to 75 traverse the membrane as a helical segment; it reads LQTPMYFFPQHLAFVDICYTS. The Extracellular portion of the chain corresponds to 76-99; the sequence is AITPKMLQSFTEENNLITFRGCVI. C97 and C189 are oxidised to a cystine. The helical transmembrane segment at 100–120 threads the bilayer; that stretch reads QFLVYATFATSDCYLLAIMAM. Residues 121 to 133 are Cytoplasmic-facing; it reads DCYVAICKPLRYP. The helical transmembrane segment at 134-154 threads the bilayer; the sequence is MIMSQTVYIQLVAGSYIIGSI. A glycan (N-linked (GlcNAc...) asparagine) is linked at N155. Residues 155-196 lie on the Extracellular side of the membrane; sequence NASVHTGFTFSLSFCKSNKINHFFCDGLPILALSCSNIDINI. The helical transmembrane segment at 197 to 217 threads the bilayer; that stretch reads ILDVVFVGFDLMFTELVIIFS. The Cytoplasmic segment spans residues 218–237; the sequence is YIYIMVTILKMSSTAGRKKS. Residues 238–258 traverse the membrane as a helical segment; sequence FSTCASHLTAVTIFYGTLSYM. The Extracellular portion of the chain corresponds to 259 to 271; it reads YLQPQSNNSQENM. N265 carries an N-linked (GlcNAc...) asparagine glycan. A helical transmembrane segment spans residues 272 to 292; sequence KVASIFYGTVIPMLNPLIYSL. The Cytoplasmic segment spans residues 293–298; the sequence is RNKEGK.

The protein belongs to the G-protein coupled receptor 1 family.

It localises to the cell membrane. Functionally, odorant receptor. The polypeptide is Olfactory receptor 5AK3 (OR5AK3P) (Homo sapiens (Human)).